A 210-amino-acid chain; its full sequence is Glutathione S-transferase P 2 (210 aa).

The GST N-terminal domain occupies 1–82 (SGYTLTYFPL…LLARYGLSGS (82 aa)). Glutathione contacts are provided by residues Y7, R13, W38, K46, 53-54 (QI), and 66-67 (QS). A GST C-terminal domain is found at 83 to 204 (NEREIAINEM…KSEGRKRRPI (122 aa)).

The protein belongs to the GST superfamily. Pi family. As to quaternary structure, homodimer. In terms of tissue distribution, liver, kidney, muscle, skin, lung and ovary.

The catalysed reaction is RX + glutathione = an S-substituted glutathione + a halide anion + H(+). Functionally, conjugation of reduced glutathione to a wide number of exogenous and endogenous hydrophobic electrophiles. In Bufo bufo (European toad), this protein is Glutathione S-transferase P 2.